The primary structure comprises 339 residues: GTPase Obg (339 aa).

Residues Met-1 to Ile-159 form the Obg domain. Residues Ala-160–Glu-327 enclose the OBG-type G domain. GTP-binding positions include Gly-166–Ser-173, Phe-191–Tyr-195, Asp-212–Gly-215, Ser-279–Asp-282, and Ser-308–Val-310. Residues Ser-173 and Thr-193 each contribute to the Mg(2+) site.

The protein belongs to the TRAFAC class OBG-HflX-like GTPase superfamily. OBG GTPase family. In terms of assembly, monomer. Requires Mg(2+) as cofactor.

It localises to the cytoplasm. In terms of biological role, an essential GTPase which binds GTP, GDP and possibly (p)ppGpp with moderate affinity, with high nucleotide exchange rates and a fairly low GTP hydrolysis rate. Plays a role in control of the cell cycle, stress response, ribosome biogenesis and in those bacteria that undergo differentiation, in morphogenesis control. In Bartonella bacilliformis (strain ATCC 35685 / KC583 / Herrer 020/F12,63), this protein is GTPase Obg.